The following is an 896-amino-acid chain: FHIP family protein C05D11.8 (896 aa).

The tract at residues 823 to 865 (STASSPRTSDDHDPTLFYGRSTMAPPGRKPLLREPSRQETLDD) is disordered. Over residues 853 to 865 (LLREPSRQETLDD) the composition is skewed to basic and acidic residues.

Belongs to the FHIP family.

This is FHIP family protein C05D11.8 from Caenorhabditis elegans.